The primary structure comprises 164 residues: Putative anionic 4-hydroxy-benzoate permease (164 aa).

Residues 1–30 (CGRRRGSLAWPDASSPSANPRPGAGAAESS) are disordered. The next 3 helical transmembrane spans lie at 62–82 (LWVACFGFGTGACIILALMFM), 97–117 (GMAQCVGYLLAAFGPPLVGGL), and 126–146 (PALTVCLVLSLTMAAAGMLAG).

The protein belongs to the major facilitator superfamily. Cyanate porter (TC 2.A.1.17) family.

The protein resides in the cell membrane. Its function is as follows. May be involved in uptake of anionic 4-hydroxy-benzoate. In Thauera aromatica, this protein is Putative anionic 4-hydroxy-benzoate permease.